The following is a 165-amino-acid chain: Protein OPG091 (165 aa).

Belongs to the orthopoxvirus OPG091 family.

The protein localises to the virion. Its subcellular location is the host cytoplasm. Its function is as follows. Contributes to vaccinia virus virulence in mice but not to replication in cell culture. The protein is Protein OPG091 (OPG091) of Homo sapiens (Human).